The chain runs to 1342 residues: DNA-directed RNA polymerase subunit beta (1342 aa).

N6-acetyllysine occurs at positions 1022 and 1200.

It belongs to the RNA polymerase beta chain family. As to quaternary structure, the RNAP catalytic core consists of 2 alpha, 1 beta, 1 beta' and 1 omega subunit. When a sigma factor is associated with the core the holoenzyme is formed, which can initiate transcription.

The catalysed reaction is RNA(n) + a ribonucleoside 5'-triphosphate = RNA(n+1) + diphosphate. In terms of biological role, DNA-dependent RNA polymerase catalyzes the transcription of DNA into RNA using the four ribonucleoside triphosphates as substrates. The sequence is that of DNA-directed RNA polymerase subunit beta from Shigella dysenteriae serotype 1 (strain Sd197).